A 182-amino-acid chain; its full sequence is Small ribosomal subunit protein uS4 (182 aa).

Disordered regions lie at residues 1–23 and 158–182; these read MGHPKKPRKQYDTPSHPWNADRI and SSVAKQFETQETEEVAAEEEPKDEE. The S4 RNA-binding domain maps to 103 to 170; it reads RRLQSLVFKR…AKQFETQETE (68 aa). Residues 167-182 are compositionally biased toward acidic residues; the sequence is QETEEVAAEEEPKDEE.

This sequence belongs to the universal ribosomal protein uS4 family. As to quaternary structure, part of the 30S ribosomal subunit. Contacts protein S5. The interaction surface between S4 and S5 is involved in control of translational fidelity.

One of the primary rRNA binding proteins, it binds directly to 16S rRNA where it nucleates assembly of the body of the 30S subunit. In terms of biological role, with S5 and S12 plays an important role in translational accuracy. This Methanosphaera stadtmanae (strain ATCC 43021 / DSM 3091 / JCM 11832 / MCB-3) protein is Small ribosomal subunit protein uS4.